A 420-amino-acid chain; its full sequence is Cell division protein FtsA (420 aa).

Belongs to the FtsA/MreB family. Self-interacts. Interacts with FtsZ.

The protein localises to the cell inner membrane. Cell division protein that is involved in the assembly of the Z ring. May serve as a membrane anchor for the Z ring. The chain is Cell division protein FtsA from Escherichia coli O157:H7.